Reading from the N-terminus, the 241-residue chain is Uridylate kinase (241 aa).

15-18 lines the ATP pocket; the sequence is KLSG. Residues 23-28 form an involved in allosteric activation by GTP region; that stretch reads GAEGFG. Residue Gly-57 coordinates UMP. Residues Gly-58 and Arg-62 each contribute to the ATP site. UMP contacts are provided by residues Asp-77 and 138–145; that span reads TGNPFFTT. ATP is bound by residues Thr-165, Phe-171, and Asp-174.

This sequence belongs to the UMP kinase family. As to quaternary structure, homohexamer.

Its subcellular location is the cytoplasm. The catalysed reaction is UMP + ATP = UDP + ADP. It participates in pyrimidine metabolism; CTP biosynthesis via de novo pathway; UDP from UMP (UMPK route): step 1/1. Allosterically activated by GTP. Inhibited by UTP. In terms of biological role, catalyzes the reversible phosphorylation of UMP to UDP. The sequence is that of Uridylate kinase from Sodalis glossinidius (strain morsitans).